A 256-amino-acid chain; its full sequence is Spheroidene monooxygenase (256 aa).

Residues 1-23 (MTNELSNAAGASQQGPAASSFSA) are compositionally biased toward low complexity. Positions 1-26 (MTNELSNAAGASQQGPAASSFSADTP) are disordered.

It belongs to the CrtA family. Requires heme as cofactor.

It catalyses the reaction spheroidene + 4 reduced [2Fe-2S]-[ferredoxin] + 2 O2 + 4 H(+) = spheroiden-2-one + 4 oxidized [2Fe-2S]-[ferredoxin] + 3 H2O. The enzyme catalyses spirilloxanthin + 4 reduced [2Fe-2S]-[ferredoxin] + 2 O2 + 4 H(+) = 2-oxospirilloxanthin + 4 oxidized [2Fe-2S]-[ferredoxin] + 3 H2O. The catalysed reaction is 2-oxospirilloxanthin + 4 reduced [2Fe-2S]-[ferredoxin] + 2 O2 + 4 H(+) = 2,2'-dioxospirilloxanthin + 4 oxidized [2Fe-2S]-[ferredoxin] + 3 H2O. It carries out the reaction spheroidene + 2 reduced [2Fe-2S]-[ferredoxin] + O2 + 2 H(+) = 2-hydroxyspheroidene + 2 oxidized [2Fe-2S]-[ferredoxin] + H2O. It catalyses the reaction 2-hydroxyspheroidene + 2 reduced [2Fe-2S]-[ferredoxin] + O2 + 2 H(+) = 2,2-dihydroxyspheroidene + 2 oxidized [2Fe-2S]-[ferredoxin] + H2O. The enzyme catalyses 2,2-dihydroxyspheroidene = spheroiden-2-one + H2O. The catalysed reaction is spirilloxanthin + 2 reduced [2Fe-2S]-[ferredoxin] + O2 + 2 H(+) = 2-hydroxyspirilloxanthin + 2 oxidized [2Fe-2S]-[ferredoxin] + H2O. It carries out the reaction 2-hydroxyspirilloxanthin + 2 reduced [2Fe-2S]-[ferredoxin] + O2 + 2 H(+) = 2,2-dihydroxyspirilloxanthin + 2 oxidized [2Fe-2S]-[ferredoxin] + H2O. It catalyses the reaction 2,2-dihydroxyspirilloxanthin = 2-oxospirilloxanthin + H2O. The enzyme catalyses 2-oxospirilloxanthin + 2 reduced [2Fe-2S]-[ferredoxin] + O2 + 2 H(+) = 2'-hydroxy-2-oxospirilloxanthin + 2 oxidized [2Fe-2S]-[ferredoxin] + H2O. The catalysed reaction is 2'-hydroxy-2-oxospirilloxanthin + 2 reduced [2Fe-2S]-[ferredoxin] + O2 + 2 H(+) = 2',2'-dihydroxy-2-oxospirilloxanthin + 2 oxidized [2Fe-2S]-[ferredoxin] + H2O. It carries out the reaction 2',2'-dihydroxy-2-oxospirilloxanthin = 2,2'-dioxospirilloxanthin + H2O. The protein operates within carotenoid biosynthesis; spheroidene biosynthesis. Its pathway is carotenoid biosynthesis; spirilloxanthin biosynthesis. Its function is as follows. Involved in the biosynthesis of the carotenoids spheroidene and spirilloxanthin. Catalyzes the introduction of one keto group at the C-2 position of spheroidene and two keto groups at the C-2 and C-2' positions of spirilloxanthin. This is Spheroidene monooxygenase from Rubrivivax gelatinosus (Rhodocyclus gelatinosus).